The following is a 214-amino-acid chain: Transmembrane emp24 domain-containing protein p24delta10 (214 aa).

Positions M1–S24 are cleaved as a signal peptide. The Lumenal portion of the chain corresponds to L25 to K181. The region spanning T34–S149 is the GOLD domain. The stretch at L164–S177 forms a coiled coil. Residue R167 is modified to Omega-N-methylated arginine. N175 carries an N-linked (GlcNAc...) asparagine glycan. The chain crosses the membrane as a helical span at residues M182–L202. At H203–I214 the chain is on the cytoplasmic side. Positions F207–F208 match the COPII vesicle coat-binding motif. Residues F207–I214 carry the COPI vesicle coat-binding motif.

Belongs to the EMP24/GP25L family. Probably oligomerizes with other members of the EMP24/GP25L family. Associates with the COPI vesicle coat (coatomer). Associates with the COPII vesicle coat (coatomer).

It localises to the endoplasmic reticulum membrane. Its subcellular location is the golgi apparatus. The protein localises to the cis-Golgi network membrane. It is found in the golgi stack membrane. In terms of biological role, involved in vesicular protein trafficking. Mainly functions in the early secretory pathway. Thought to act as cargo receptor at the lumenal side for incorporation of secretory cargo molecules into transport vesicles and to be involved in vesicle coat formation at the cytoplasmic side. The polypeptide is Transmembrane emp24 domain-containing protein p24delta10 (Arabidopsis thaliana (Mouse-ear cress)).